A 442-amino-acid chain; its full sequence is Tol-Pal system protein TolB (442 aa).

A signal peptide spans 1–26 (MRHRSCFSLFAGLALVFCLAVGTAAA).

This sequence belongs to the TolB family. In terms of assembly, the Tol-Pal system is composed of five core proteins: the inner membrane proteins TolA, TolQ and TolR, the periplasmic protein TolB and the outer membrane protein Pal. They form a network linking the inner and outer membranes and the peptidoglycan layer.

It localises to the periplasm. Its function is as follows. Part of the Tol-Pal system, which plays a role in outer membrane invagination during cell division and is important for maintaining outer membrane integrity. The protein is Tol-Pal system protein TolB of Nitratidesulfovibrio vulgaris (strain ATCC 29579 / DSM 644 / CCUG 34227 / NCIMB 8303 / VKM B-1760 / Hildenborough) (Desulfovibrio vulgaris).